The chain runs to 299 residues: S-fimbrial protein subunit SfaH (299 aa).

It belongs to the fimbrial protein family.

It is found in the fimbrium. Its function is as follows. Fimbriae (also called pili), polar filaments radiating from the surface of the bacterium to a length of 0.5-1.5 micrometers and numbering 100-300 per cell, enable bacteria to colonize the epithelium of specific host organs. In terms of biological role, a minor fimbrial subunit. This protein is necessary for full expression of S-specific binding. S-fimbrial adhesins enable pathogenic E.coli causing urinary-tract infections or newborn meningitis to attach to glycoproteins terminating with alpha-sialic acid-(2-3)-beta-Gal. This Escherichia coli O6:K15:H31 (strain 536 / UPEC) protein is S-fimbrial protein subunit SfaH (sfaH).